Here is a 275-residue protein sequence, read N- to C-terminus: Formamidopyrimidine-DNA glycosylase (275 aa).

Pro2 functions as the Schiff-base intermediate with DNA in the catalytic mechanism. The active-site Proton donor is Glu3. Lys58 (proton donor; for beta-elimination activity) is an active-site residue. DNA-binding residues include His93, Arg111, and Arg156. The FPG-type zinc finger occupies 241–275 (FAYDRAGLPCRVCGTPIRQIVQGQRSTYFCPTCQR). Arg265 (proton donor; for delta-elimination activity) is an active-site residue.

Belongs to the FPG family. Monomer. Requires Zn(2+) as cofactor.

The catalysed reaction is Hydrolysis of DNA containing ring-opened 7-methylguanine residues, releasing 2,6-diamino-4-hydroxy-5-(N-methyl)formamidopyrimidine.. The enzyme catalyses 2'-deoxyribonucleotide-(2'-deoxyribose 5'-phosphate)-2'-deoxyribonucleotide-DNA = a 3'-end 2'-deoxyribonucleotide-(2,3-dehydro-2,3-deoxyribose 5'-phosphate)-DNA + a 5'-end 5'-phospho-2'-deoxyribonucleoside-DNA + H(+). Its function is as follows. Involved in base excision repair of DNA damaged by oxidation or by mutagenic agents. Acts as a DNA glycosylase that recognizes and removes damaged bases. Has a preference for oxidized purines, such as 7,8-dihydro-8-oxoguanine (8-oxoG). Has AP (apurinic/apyrimidinic) lyase activity and introduces nicks in the DNA strand. Cleaves the DNA backbone by beta-delta elimination to generate a single-strand break at the site of the removed base with both 3'- and 5'-phosphates. The protein is Formamidopyrimidine-DNA glycosylase of Burkholderia vietnamiensis (strain G4 / LMG 22486) (Burkholderia cepacia (strain R1808)).